Consider the following 465-residue polypeptide: 2-halobenzoate 1,2-dioxygenase large subunit (465 aa).

In terms of domain architecture, Rieske spans 56–154 (WVFLAHESQV…GFNVDGSHDL (99 aa)). [2Fe-2S] cluster is bound by residues Cys98, His100, Cys118, and His121. Residues His227 and His232 each contribute to the Fe cation site.

It belongs to the bacterial ring-hydroxylating dioxygenase alpha subunit family. In terms of assembly, heterohexamer of 3 large (CbdA) subunits and 3 small (CbdB) subunits. The heterohexamer is part of 2-halobenzoate dioxygenase two component enzyme system. The other component is a NADH:acceptor reductase (CdbC). The cofactor is [2Fe-2S] cluster. Fe(2+) serves as cofactor.

It catalyses the reaction a 2-halobenzoate + NADH + O2 + H(+) = a halide anion + catechol + CO2 + NAD(+). Its pathway is xenobiotic degradation; benzoate degradation via CoA ligation. Its function is as follows. Component of 2-halobenzoate dioxygenase multicomponent enzyme system which catalyzes the incorporation of both atoms of molecular oxygen into 2-halobenzoate to form catechol. The protein is 2-halobenzoate 1,2-dioxygenase large subunit (cbdA) of Burkholderia cepacia (Pseudomonas cepacia).